The following is a 482-amino-acid chain: 3-isopropylmalate dehydratase large subunit (482 aa).

The interval 60-79 is disordered; it reads ATPDHNVPTTRAERQGGLES. [4Fe-4S] cluster contacts are provided by Cys353, Cys414, and Cys417.

It belongs to the aconitase/IPM isomerase family. LeuC type 1 subfamily. As to quaternary structure, heterodimer of LeuC and LeuD. The cofactor is [4Fe-4S] cluster.

The catalysed reaction is (2R,3S)-3-isopropylmalate = (2S)-2-isopropylmalate. Its pathway is amino-acid biosynthesis; L-leucine biosynthesis; L-leucine from 3-methyl-2-oxobutanoate: step 2/4. Catalyzes the isomerization between 2-isopropylmalate and 3-isopropylmalate, via the formation of 2-isopropylmaleate. The sequence is that of 3-isopropylmalate dehydratase large subunit from Xanthomonas euvesicatoria pv. vesicatoria (strain 85-10) (Xanthomonas campestris pv. vesicatoria).